We begin with the raw amino-acid sequence, 346 residues long: Biotin synthase (346 aa).

The Radical SAM core domain occupies 38–256; sequence RQVQVSTLLS…IAVARIMMPT (219 aa). Cysteine 53, cysteine 57, and cysteine 60 together coordinate [4Fe-4S] cluster. 4 residues coordinate [2Fe-2S] cluster: cysteine 97, cysteine 128, cysteine 188, and arginine 260.

It belongs to the radical SAM superfamily. Biotin synthase family. In terms of assembly, homodimer. The cofactor is [4Fe-4S] cluster. It depends on [2Fe-2S] cluster as a cofactor.

It catalyses the reaction (4R,5S)-dethiobiotin + (sulfur carrier)-SH + 2 reduced [2Fe-2S]-[ferredoxin] + 2 S-adenosyl-L-methionine = (sulfur carrier)-H + biotin + 2 5'-deoxyadenosine + 2 L-methionine + 2 oxidized [2Fe-2S]-[ferredoxin]. Its pathway is cofactor biosynthesis; biotin biosynthesis; biotin from 7,8-diaminononanoate: step 2/2. Functionally, catalyzes the conversion of dethiobiotin (DTB) to biotin by the insertion of a sulfur atom into dethiobiotin via a radical-based mechanism. This chain is Biotin synthase, found in Escherichia coli (strain SE11).